The sequence spans 227 residues: ATP synthase F(0) complex subunit a (227 aa).

Transmembrane regions (helical) follow at residues 14–34 (LLGI…FPTP), 69–89 (WATI…LGLL), 99–119 (LSLN…IGML), 137–157 (LLIP…PLAL), 180–200 (FVLI…LFLL), and 202–222 (ILEV…LSLY).

It belongs to the ATPase A chain family. Component of the ATP synthase complex composed at least of ATP5F1A/subunit alpha, ATP5F1B/subunit beta, ATP5MC1/subunit c (homooctomer), MT-ATP6/subunit a, MT-ATP8/subunit 8, ATP5ME/subunit e, ATP5MF/subunit f, ATP5MG/subunit g, ATP5MK/subunit k, ATP5MJ/subunit j, ATP5F1C/subunit gamma, ATP5F1D/subunit delta, ATP5F1E/subunit epsilon, ATP5PF/subunit F6, ATP5PB/subunit b, ATP5PD/subunit d, ATP5PO/subunit OSCP. ATP synthase complex consists of a soluble F(1) head domain (subunits alpha(3) and beta(3)) - the catalytic core - and a membrane F(0) domain - the membrane proton channel (subunits c, a, 8, e, f, g, k and j). These two domains are linked by a central stalk (subunits gamma, delta, and epsilon) rotating inside the F1 region and a stationary peripheral stalk (subunits F6, b, d, and OSCP). Interacts with DNAJC30; interaction is direct.

Its subcellular location is the mitochondrion inner membrane. It carries out the reaction H(+)(in) = H(+)(out). Its function is as follows. Subunit a, of the mitochondrial membrane ATP synthase complex (F(1)F(0) ATP synthase or Complex V) that produces ATP from ADP in the presence of a proton gradient across the membrane which is generated by electron transport complexes of the respiratory chain. ATP synthase complex consist of a soluble F(1) head domain - the catalytic core - and a membrane F(1) domain - the membrane proton channel. These two domains are linked by a central stalk rotating inside the F(1) region and a stationary peripheral stalk. During catalysis, ATP synthesis in the catalytic domain of F(1) is coupled via a rotary mechanism of the central stalk subunits to proton translocation. With the subunit c (ATP5MC1), forms the proton-conducting channel in the F(0) domain, that contains two crucial half-channels (inlet and outlet) that facilitate proton movement from the mitochondrial intermembrane space (IMS) into the matrix. Protons are taken up via the inlet half-channel and released through the outlet half-channel, following a Grotthuss mechanism. The sequence is that of ATP synthase F(0) complex subunit a from Squalus acanthias (Spiny dogfish).